The primary structure comprises 512 residues: Cytochrome P450 monooxygenase hkm5 (512 aa).

A helical membrane pass occupies residues leucine 18–valine 38. N-linked (GlcNAc...) asparagine glycosylation is found at asparagine 184, asparagine 263, asparagine 275, asparagine 374, and asparagine 419. Heme is bound at residue cysteine 456.

This sequence belongs to the cytochrome P450 family. Heme is required as a cofactor.

The protein localises to the membrane. It carries out the reaction hancockiamide A + reduced [NADPH--hemoprotein reductase] + O2 = hancockiamide G + oxidized [NADPH--hemoprotein reductase] + 2 H2O + H(+). It catalyses the reaction hancockiamide B + reduced [NADPH--hemoprotein reductase] + O2 = hancockiamide C + oxidized [NADPH--hemoprotein reductase] + 2 H2O + H(+). The enzyme catalyses hancockiamide D + reduced [NADPH--hemoprotein reductase] + O2 = hancockiamide H + oxidized [NADPH--hemoprotein reductase] + 2 H2O + H(+). It participates in secondary metabolite biosynthesis. Functionally, cytochrome P450 monooxygenase; part of the gene cluster that mediates the biosynthesis of hancockiamides, an unusual new family of N-cinnamoylated piperazines. The NRPS hkm10 and the NmrA-like reductase hkm9 are proposed to convert two molecules of L-Phe to the intermediary piperazine called xenocockiamide A. Xenocockiamide A is then converted to hancockiamide D via a series of hydroxylations and O-methylations. The tyrosinase hkm6 may catalyze an aromatic hydroxylation, then the 2-oxoglutarate-dependent Fe(II) dioxygenase hkm4 and the FAD-dependent phenol hydroxylase hkm7 may catalyze consecutive hydroxylations to install 2 more hydroxy groups, and the methyltransferase hkm8 probably catalyzes two methylations using 2 molecules of S-adenosyl-L-methionine (SAM). The NRPS hkm11 activates and transfers trans-cinnamate supplied by the PAL hkm12 to hancockiamide D and produces hancockiamide A. NRPS Hkm11 has the flexibility to tolerate the bulky hancockiamide G as a substrate and the absence of the acetyl-transferase hkm3 opens up the opportunity for hkm11 to introduce a second N-cinnamoyl moiety. The cytochrome P450 monooxygenase hkm5 catalyzes the methylenedioxy bridge formation, converting hancockiamide A into hancockiamide G. Hkm5 can also convert hancockiamide B into hancockiamide C, and hancockiamide D into hancockiamide H. The N-acetyltransferase hkm3 finally transfers an acetyl group to 1-N of piperazine, converting hancockiamide A into hancockiamide B and hancockiamide G into hancockiamide C. This Aspergillus hancockii protein is Cytochrome P450 monooxygenase hkm5.